Reading from the N-terminus, the 496-residue chain is WD repeat-containing protein 37 (496 aa).

2 stretches are compositionally biased toward polar residues: residues 1-13 (MPTE…TARQ) and 22-31 (SLSIRRTNSS). A disordered region spans residues 1–50 (MPTESGSCSTARQAKQKRKSHSLSIRRTNSSEQERTGLPREMLEGQDSKL). The span at 32 to 47 (EQERTGLPREMLEGQD) shows a compositional bias: basic and acidic residues. WD repeat units follow at residues 154–194 (GHRD…CLVK) and 197–236 (GHVG…PTPQ). Residues 238–267 (VADTSQQISGEDEIECSDKDEPDIDGDVSS) are disordered. Over residues 247–265 (GEDEIECSDKDEPDIDGDV) the composition is skewed to acidic residues. WD repeat units lie at residues 281-320 (SHQG…LVHS), 323-362 (GHDQ…IHSV), 367-405 (GHTD…SPIA), 408-447 (RTDS…LARL), and 454-495 (GHRR…LLQE).

As to quaternary structure, forms homodimers. Interacts with PACS1. Interacts with PACS2.

It localises to the cytoplasm. It is found in the nucleus. Required for normal ER Ca2+ handling in lymphocytes. Together with PACS1, it plays an essential role in stabilizing peripheral lymphocyte populations. In Mus musculus (Mouse), this protein is WD repeat-containing protein 37 (Wdr37).